We begin with the raw amino-acid sequence, 140 residues long: HTH-type transcriptional regulator YfmP (140 aa).

Residues 1-73 (MEWMKIDQVA…LQELQHFMET (73 aa)) enclose the HTH merR-type domain. The H-T-H motif DNA-binding region spans 6 to 25 (IDQVAKRSGLTKRTIRFYEE).

Its function is as follows. Repressor of the yfmOP operon. A mutation in yfmP leads to overexpression of yfmO, probably causing a decrease in cellular copper that is eventually responsible for a reduced copper induction of copZA. This is HTH-type transcriptional regulator YfmP (yfmP) from Bacillus subtilis (strain 168).